The sequence spans 1023 residues: Rho GTPase-activating protein 11A (1023 aa).

The region spanning 49–239 (VPFNALPHSA…TLIDYASDIG (191 aa)) is the Rho-GAP domain. Residue serine 285 is modified to Phosphoserine. Threonine 306 bears the Phosphothreonine mark. Serine 316 and serine 318 each carry phosphoserine. Threonine 323 is subject to Phosphothreonine. Residues serine 339, serine 340, and serine 484 each carry the phosphoserine modification. Threonine 508 carries the phosphothreonine modification. The interval 567-589 (TPSNLNNKHNSNITSSPLSGDEN) is disordered. A phosphoserine mark is found at serine 582, serine 585, serine 638, and serine 675. Residues 714–734 (KQEFSSDEEIKKQQSPKDKLN) form a disordered region. The segment covering 721 to 734 (EEIKKQQSPKDKLN) has biased composition (basic and acidic residues). At serine 847 the chain carries Phosphoserine. Phosphothreonine is present on threonine 866. Serine 868 is modified (phosphoserine). Residues 999 to 1023 (AWYKGSPKHPIGKTQLLPTSKPVDL) form a disordered region.

It is found in the nucleus. In terms of biological role, GTPase activator for the Rho-type GTPases by converting them to an inactive GDP-bound state. This chain is Rho GTPase-activating protein 11A, found in Homo sapiens (Human).